Consider the following 92-residue polypeptide: Large ribosomal subunit protein uL23c (92 aa).

The protein belongs to the universal ribosomal protein uL23 family. As to quaternary structure, part of the 50S ribosomal subunit.

Its subcellular location is the plastid. The protein resides in the chloroplast. Binds to 23S rRNA. The chain is Large ribosomal subunit protein uL23c (rpl23) from Nephroselmis olivacea (Green alga).